The sequence spans 261 residues: MSKRILLTNDDGVYAAGIRAAYRSVSDLGDVTVSAPAQQQSGVGRSISIFEPLRITRTTIDGIEVHAIGGTPTDSVILGIFTIMKELPDLILSGFNIGENISTDTITTSGTIGAALEGASYGVPAIAASLQVTEEGLKFDDLRDFQHDFDVGIKFVNGVAKKVLKNGLPENVDLLNINIPHFVEEDSEVEITRLARKFFRTGVEERRDPRGRPYYWIAGDLIHTAEKGTDVNAIEKGHISVTPISLDATSPINFSEIEHLM.

Positions 10, 11, 41, and 96 each coordinate a divalent metal cation.

It belongs to the SurE nucleotidase family. It depends on a divalent metal cation as a cofactor.

It is found in the cytoplasm. The enzyme catalyses a ribonucleoside 5'-phosphate + H2O = a ribonucleoside + phosphate. Nucleotidase that shows phosphatase activity on nucleoside 5'-monophosphates. This chain is 5'-nucleotidase SurE, found in Methanococcoides burtonii (strain DSM 6242 / NBRC 107633 / OCM 468 / ACE-M).